Here is a 273-residue protein sequence, read N- to C-terminus: Phosphate import ATP-binding protein PstB (273 aa).

Positions 19–258 (ISIQNVTISY…FNETEKIFNS (240 aa)) constitute an ABC transporter domain. 51-58 (GPSGCGKS) is a binding site for ATP.

Belongs to the ABC transporter superfamily. Phosphate importer (TC 3.A.1.7) family. In terms of assembly, the complex is composed of two ATP-binding proteins (PstB), two transmembrane proteins (PstC and PstA) and a solute-binding protein (PstS).

The protein resides in the cell inner membrane. It catalyses the reaction phosphate(out) + ATP + H2O = ADP + 2 phosphate(in) + H(+). Functionally, part of the ABC transporter complex PstSACB involved in phosphate import. Responsible for energy coupling to the transport system. The sequence is that of Phosphate import ATP-binding protein PstB from Parasynechococcus marenigrum (strain WH8102).